Here is a 379-residue protein sequence, read N- to C-terminus: V-type proton ATPase subunit S1 (379 aa).

A signal peptide spans 1–17; that stretch reads MLWKSLIALCVIGAAVA. At 18–333 the chain is on the lumenal side; the sequence is EQTPVFLWGA…WDCVGFVTPG (316 aa). N-linked (GlcNAc...) asparagine glycosylation is found at Asn225 and Asn284. Residues Cys282 and Cys326 are joined by a disulfide bond. Residues 334–354 traverse the membrane as a helical segment; that stretch reads ILMGLFVVALLLVIMFVGVCW. The Cytoplasmic segment spans residues 355–379; the sequence is MMDINTMDRFDDPKGKTITINAAAE.

It belongs to the vacuolar ATPase subunit S1 family. As to quaternary structure, accessory component of the multisubunit proton-transporting vacuolar (V)-ATPase protein pump. May interact with ATP6AP2.

The protein localises to the endoplasmic reticulum membrane. Its function is as follows. Accessory subunit of the proton-transporting vacuolar (V)-ATPase protein pump, which is required for luminal acidification of secretory vesicles. The chain is V-type proton ATPase subunit S1 from Drosophila melanogaster (Fruit fly).